The chain runs to 270 residues: L-fucose dehydrogenase (270 aa).

Residues Arg19, Ile21, Asp40, Lys41, Asp62, Val63, Asn89, Tyr154, Lys158, Ile187, Thr189, and Leu191 each coordinate NAD(+). Tyr154 acts as the Proton acceptor in catalysis.

This sequence belongs to the short-chain dehydrogenases/reductases (SDR) family. In terms of assembly, homotetramer. As to expression, highly expressed in brain, placenta, liver and kidney.

Its subcellular location is the cytoplasm. The catalysed reaction is L-fucose + NAD(+) = L-fucono-1,5-lactone + NADH + H(+). The enzyme catalyses D-arabinose + NAD(+) = D-arabinono-1,5-lactone + NADH + H(+). It catalyses the reaction L-galactose + NAD(+) = L-galactono-1,5-lactone + NADH + H(+). It functions in the pathway carbohydrate degradation; L-fucose degradation. Its function is as follows. Catalyzes the NAD(+)-dependent oxidation of L-fucose, yielding L-fucono-1,5-lactone, which rapidly converts spontaneously to L-fucone-1,4-lactone. Can also act on D-arabinose and L-galactose, with lower catalytic efficiency. Does not use NADPH. May be the initial enzyme of the L-fucose degradation pathway in mammals. The sequence is that of L-fucose dehydrogenase from Homo sapiens (Human).